The primary structure comprises 222 residues: Adenylate kinase (222 aa).

Residue 10 to 15 (GAGKGT) coordinates ATP. The interval 30-59 (STGDMLRAAVKAGTPLGIEAKKVMDAGGLV) is NMP. AMP is bound by residues T31, R36, 57–59 (GLV), 85–88 (GFPR), and Q92. An LID region spans residues 122–159 (GRRVHVASGRTYHVKYNPPKTEGVDDESGEPLIQRDDD). ATP contacts are provided by residues R123 and 132-133 (TY). The interval 138–160 (NPPKTEGVDDESGEPLIQRDDDK) is disordered. AMP contacts are provided by R156 and R167. G207 contributes to the ATP binding site.

This sequence belongs to the adenylate kinase family. In terms of assembly, monomer.

It is found in the cytoplasm. It carries out the reaction AMP + ATP = 2 ADP. It functions in the pathway purine metabolism; AMP biosynthesis via salvage pathway; AMP from ADP: step 1/1. Catalyzes the reversible transfer of the terminal phosphate group between ATP and AMP. Plays an important role in cellular energy homeostasis and in adenine nucleotide metabolism. In Ralstonia pickettii (strain 12J), this protein is Adenylate kinase.